Here is a 421-residue protein sequence, read N- to C-terminus: Serine hydroxymethyltransferase (421 aa).

Residues Leu-120 and 124–126 (GHL) each bind (6S)-5,6,7,8-tetrahydrofolate. An N6-(pyridoxal phosphate)lysine modification is found at Lys-229. 354-356 (SPF) contacts (6S)-5,6,7,8-tetrahydrofolate.

Belongs to the SHMT family. In terms of assembly, homodimer. Pyridoxal 5'-phosphate is required as a cofactor.

It is found in the cytoplasm. It catalyses the reaction (6R)-5,10-methylene-5,6,7,8-tetrahydrofolate + glycine + H2O = (6S)-5,6,7,8-tetrahydrofolate + L-serine. It participates in one-carbon metabolism; tetrahydrofolate interconversion. The protein operates within amino-acid biosynthesis; glycine biosynthesis; glycine from L-serine: step 1/1. Catalyzes the reversible interconversion of serine and glycine with tetrahydrofolate (THF) serving as the one-carbon carrier. This reaction serves as the major source of one-carbon groups required for the biosynthesis of purines, thymidylate, methionine, and other important biomolecules. Also exhibits THF-independent aldolase activity toward beta-hydroxyamino acids, producing glycine and aldehydes, via a retro-aldol mechanism. The protein is Serine hydroxymethyltransferase of Opitutus terrae (strain DSM 11246 / JCM 15787 / PB90-1).